Consider the following 53-residue polypeptide: Large ribosomal subunit protein bL33A (53 aa).

This sequence belongs to the bacterial ribosomal protein bL33 family.

The chain is Large ribosomal subunit protein bL33A from Mycoplasmoides gallisepticum (strain R(low / passage 15 / clone 2)) (Mycoplasma gallisepticum).